The following is a 350-amino-acid chain: Cobalt-precorrin-5B C(1)-methyltransferase (350 aa).

Belongs to the CbiD family.

The enzyme catalyses Co-precorrin-5B + S-adenosyl-L-methionine = Co-precorrin-6A + S-adenosyl-L-homocysteine. It functions in the pathway cofactor biosynthesis; adenosylcobalamin biosynthesis; cob(II)yrinate a,c-diamide from sirohydrochlorin (anaerobic route): step 6/10. In terms of biological role, catalyzes the methylation of C-1 in cobalt-precorrin-5B to form cobalt-precorrin-6A. The protein is Cobalt-precorrin-5B C(1)-methyltransferase of Sulfurisphaera tokodaii (strain DSM 16993 / JCM 10545 / NBRC 100140 / 7) (Sulfolobus tokodaii).